Here is a 93-residue protein sequence, read N- to C-terminus: Small ribosomal subunit protein uS19 (93 aa).

The tract at residues 72–93 (GEFSPTRTYRGHNKKDKKMQKK) is disordered. The span at 80-93 (YRGHNKKDKKMQKK) shows a compositional bias: basic residues.

It belongs to the universal ribosomal protein uS19 family.

Protein S19 forms a complex with S13 that binds strongly to the 16S ribosomal RNA. In Aster yellows witches'-broom phytoplasma (strain AYWB), this protein is Small ribosomal subunit protein uS19.